We begin with the raw amino-acid sequence, 222 residues long: MILTINEVLTSSELNKLLDGLSRAPFVDGKTTAGWHAKLVKNTVQLDKNSQEWKKAENIVKTALDRNMLLKMAVLPKRIHSLLFSRYETGMSYGSHVDNGFMGGQEFWRSDVSFTLFLTSPDSYKGGELVIEMTEGERIYKLEAGSMIVYPSSFLHRVETVTDGVRLVVVGWIESLVRDPSEREFLFDLDTVRRSIFTKEGKSLEFDILSKTYANLLRKWGK.

Positions 78–175 (RIHSLLFSRY…RLVVVGWIES (98 aa)) constitute a Fe2OG dioxygenase domain. Residues His96, Asp98, and His156 each coordinate Fe cation. Arg166 provides a ligand contact to 2-oxoglutarate.

Fe(2+) is required as a cofactor. It depends on L-ascorbate as a cofactor.

The polypeptide is PKHD-type hydroxylase PCC8801_2196 (Rippkaea orientalis (strain PCC 8801 / RF-1) (Cyanothece sp. (strain PCC 8801))).